A 177-amino-acid polypeptide reads, in one-letter code: Endoribonuclease YbeY (177 aa).

Zn(2+) is bound by residues His118, His122, and His128.

It belongs to the endoribonuclease YbeY family. It depends on Zn(2+) as a cofactor.

Its subcellular location is the cytoplasm. Functionally, single strand-specific metallo-endoribonuclease involved in late-stage 70S ribosome quality control and in maturation of the 3' terminus of the 16S rRNA. This chain is Endoribonuclease YbeY, found in Mycobacterium sp. (strain JLS).